The following is a 229-amino-acid chain: DNA mismatch repair protein MutH (229 aa).

This sequence belongs to the MutH family.

Its subcellular location is the cytoplasm. Its function is as follows. Sequence-specific endonuclease that cleaves unmethylated GATC sequences. It is involved in DNA mismatch repair. In Shigella boydii serotype 18 (strain CDC 3083-94 / BS512), this protein is DNA mismatch repair protein MutH.